The chain runs to 2146 residues: Phospholipid-transporting ATPase ABCA7 (2146 aa).

The helical transmembrane segment at 22–42 threads the bilayer; it reads PVQLLVELLWPLFLFFILVAV. Topologically, residues 43 to 549 are extracellular; it reads RHSHPPLEHH…DVFLRVLSRS (507 aa). Residues C75 and C225 are joined by a disulfide bond. N-linked (GlcNAc...) asparagine glycosylation occurs at N312. A run of 6 helical transmembrane segments spans residues 550 to 570, 593 to 613, 626 to 646, 655 to 675, 687 to 707, and 727 to 747; these read LPLF…KAVV, LGWF…LVLV, GVVF…SFLL, LAAA…VLCV, VAAS…LALL, and VFSL…YGLA. The 232-residue stretch at 807–1038 folds into the ABC transporter 1 domain; it reads VSVRSLEKRF…LGSGYYLTLV (232 aa). 841-848 contacts ATP; the sequence is GHNGAGKT. Residues 849–869 traverse the membrane as a helical segment; sequence TTLSILSGLFPPSGGSAFILG. Residues 1048 to 1066 show a composition bias toward basic and acidic residues; that stretch reads EKADTDMEGSVDTRQEKKN. Disordered regions lie at residues 1048 to 1072 and 1185 to 1209; these read EKAD…QGSR and TALE…DAVG. A helical membrane pass occupies residues 1243–1263; it reads IVLPALFVGLALVFSLIVPPF. Over 1264–1537 the chain is Extracellular; it reads GHYPALRLSP…ALMASSVDVL (274 aa). A disulfide bridge links C1345 with C1359. 6 helical membrane passes run 1538–1558, 1584–1604, 1621–1641, 1649–1669, 1683–1703, and 1729–1749; these read VSIC…LVLI, FLWD…IFLA, LLLL…SFFF, VVLT…TFVL, ILKQ…LIDM, and VVGK…LFTL. An ABC transporter 2 domain is found at 1793–2025; that stretch reads LVLRNLTKVY…FAAGHTLTLR (233 aa). 1827–1834 provides a ligand contact to ATP; the sequence is GVNGAGKT. The disordered stretch occupies residues 2104–2146; it reads QGKDEDTEEQKEAGVGVDPAPGLQHPKRVSQFLDDPSTAETVL.

It belongs to the ABC transporter superfamily. ABCA family. Post-translationally, N-glycosylated. Expressed in leukocytes (at protein level). Widely expressed. Highly expressed in myelo-lymphatic tissues including peripheral leukocytes, thymus, spleen and bone marrow. Expressed in the hippocampus and the cerebellum. Isoform 2: Abundant in lymph node, spleen, thymus and trachea. Isoform 1: Strongly expressed in brain and bone marrow.

It localises to the cell membrane. Its subcellular location is the golgi apparatus membrane. The protein resides in the early endosome membrane. The protein localises to the cytoplasm. It is found in the cell projection. It localises to the ruffle membrane. Its subcellular location is the phagocytic cup. The protein resides in the endoplasmic reticulum. It catalyses the reaction ATP + H2O + phospholipidSide 1 = ADP + phosphate + phospholipidSide 2.. The catalysed reaction is a 1,2-diacyl-sn-glycero-3-phosphocholine(out) + ATP + H2O = a 1,2-diacyl-sn-glycero-3-phosphocholine(in) + ADP + phosphate + H(+). It carries out the reaction a 1,2-diacyl-sn-glycero-3-phospho-L-serine(out) + ATP + H2O = a 1,2-diacyl-sn-glycero-3-phospho-L-serine(in) + ADP + phosphate + H(+). Its activity is regulated as follows. ATPase activity is decreased by cholesterol and ceramide. ATPase activity is stimulated by phosphatidylserine, phosphatidylcholine and sphingomyelin, but phosphatidylserine is more effective. Catalyzes the translocation of specific phospholipids from the cytoplasmic to the extracellular/lumenal leaflet of membrane coupled to the hydrolysis of ATP. Transports preferentially phosphatidylserine over phosphatidylcholine. Plays a role in lipid homeostasis and macrophage-mediated phagocytosis. Binds APOA1 and may function in apolipoprotein-mediated phospholipid efflux from cells. May also mediate cholesterol efflux. May regulate cellular ceramide homeostasis during keratinocyte differentiation. Involved in lipid raft organization and CD1D localization on thymocytes and antigen-presenting cells, which plays an important role in natural killer T-cell development and activation. Plays a role in phagocytosis of apoptotic cells by macrophages. Macrophage phagocytosis is stimulated by APOA1 or APOA2, probably by stabilization of ABCA7. Also involved in phagocytic clearance of amyloid-beta by microglia cells and macrophages. Further limits amyloid-beta production by playing a role in the regulation of amyloid-beta A4 precursor protein (APP) endocytosis and/or processing. Amyloid-beta is the main component of amyloid plaques found in the brains of Alzheimer patients. In Homo sapiens (Human), this protein is Phospholipid-transporting ATPase ABCA7.